Reading from the N-terminus, the 462-residue chain is MQRNNRLRNLFTVPVIMARQLKRNALSAGLAFAGNATSNEFDEHLQNEVEREREIQKKKKIKRTQSKKSPDLINKSTFQSRTIGSKKEKHRQLDPEYEIVIDGPLRKIKPYHFTYRTFCKERWRDKKLVDVFISEFRDRESEYYKRTIENGDVHINDETADLSTVIRNGDLITHQVHRHEPPVTSRPIKVIFEDDNIMVIDKPSGIPVHPTGRYRFNTITKMLQNNLGFVVNPCNRLDRLTSGLMFLAKTPKGADNIGDQLKAREVTKEYVAKVVGEFPETEVIVEKPLKLIEPRLALNAVCQMDEKGAKHAKTVFNRISYDGKTSIVKCKPLTGRSHQIRVHLQYLGHPIANDPIYSNDEVWGNNLGKGGQADFDIVITKLDEIGKRKPAKSWFHSNGGYGEVLRQEKCSICESDLYTDPGPNDLDLWLHAYLYESTETEEGTEKKKWCYKTEYPEWALRR.

The N-terminal 24 residues, 1 to 24 (MQRNNRLRNLFTVPVIMARQLKRN), are a transit peptide targeting the mitochondrion. An S4 RNA-binding domain is found at 127–188 (KLVDVFISEF…HEPPVTSRPI (62 aa)). D238 is an active-site residue.

This sequence belongs to the pseudouridine synthase RluA family.

Its subcellular location is the mitochondrion. It catalyses the reaction uridine(32) in tRNA = pseudouridine(32) in tRNA. In terms of biological role, responsible for synthesis of pseudouridine from uracil-32 in mitochondrial transfer RNAs. This Saccharomyces cerevisiae (strain ATCC 204508 / S288c) (Baker's yeast) protein is tRNA pseudouridine(32) synthase, mitochondrial (PUS9).